Consider the following 1183-residue polypeptide: DNA-directed RNA polymerase subunit beta (1183 aa).

Belongs to the RNA polymerase beta chain family. The RNAP catalytic core consists of 2 alpha, 1 beta, 1 beta' and 1 omega subunit. When a sigma factor is associated with the core the holoenzyme is formed, which can initiate transcription.

It catalyses the reaction RNA(n) + a ribonucleoside 5'-triphosphate = RNA(n+1) + diphosphate. In terms of biological role, DNA-dependent RNA polymerase catalyzes the transcription of DNA into RNA using the four ribonucleoside triphosphates as substrates. The chain is DNA-directed RNA polymerase subunit beta from Staphylococcus aureus (strain COL).